The following is a 223-amino-acid chain: NLP effector protein 3 (223 aa).

The short motif at 90 to 100 is the Conserved undecapeptide motif element; sequence AIMYVWYFPKD. The Conserved heptapeptide motif motif lies at 107-113; sequence GHRHDWE.

Belongs to the Necrosis inducing protein (NPP1) family.

Its subcellular location is the secreted. It is found in the host cytoplasm. Its function is as follows. Probable secreted effector that may act as a pathogen-associated molecular pattern (PAMP) recognized by the plant immune system. Seems not to induce necrosis, neither in several susceptible or resistant Vitis species nor in the dicot model plant Nicotiana benthamiana. The polypeptide is NLP effector protein 3 (Plasmopara viticola (Downy mildew of grapevine)).